We begin with the raw amino-acid sequence, 61 residues long: Small ribosomal subunit protein uS14 (61 aa).

Zn(2+) is bound by residues cysteine 24, cysteine 27, cysteine 40, and cysteine 43.

The protein belongs to the universal ribosomal protein uS14 family. Zinc-binding uS14 subfamily. Part of the 30S ribosomal subunit. Contacts proteins S3 and S10. The cofactor is Zn(2+).

Binds 16S rRNA, required for the assembly of 30S particles and may also be responsible for determining the conformation of the 16S rRNA at the A site. The protein is Small ribosomal subunit protein uS14 of Staphylococcus aureus (strain USA300 / TCH1516).